The primary structure comprises 299 residues: MRVVILGSAAGGGLPQWNCRCPICTLARSEPDRVRPRTQSSIAVSADGSDWLLINASPDIRQQLFDNPQMHPREGLRHSPIRAVLLTNGDVDHVAGLLTLREGQPYTLYGTRGILDSVNANRVFDVMAEGVVARQPIGMDQRFEPLPGLSVTLFPVPGKVPLWLEDETMEIGAETETTVGALIEAGGRRLAYIPGCARVTDGLRARIAGVDALLFDGTVLHDDDMIRAGVGTKTGWRMGHVPMRGANGSIDALAAVEIGRRVFVHINNTNPVLVEGSPERVDVEAAGWTVAHDGLSLSL.

It belongs to the PqqB family.

Its pathway is cofactor biosynthesis; pyrroloquinoline quinone biosynthesis. Functionally, may be involved in the transport of PQQ or its precursor to the periplasm. The sequence is that of Coenzyme PQQ synthesis protein B from Methylobacterium radiotolerans (strain ATCC 27329 / DSM 1819 / JCM 2831 / NBRC 15690 / NCIMB 10815 / 0-1).